Consider the following 436-residue polypeptide: Protein translocase subunit SecY (436 aa).

The next 8 membrane-spanning stretches (helical) occupy residues 17 to 37 (ILLT…PVPY), 72 to 92 (FGLL…IQLL), 122 to 142 (TFFW…EVIF), 146 to 166 (LQVY…VLWF), 209 to 229 (FSNI…CIYI), 269 to 289 (VMPL…FEII), 309 to 329 (ISYW…IFFF), and 380 to 400 (IFLI…NLNI).

It belongs to the SecY/SEC61-alpha family. As to quaternary structure, component of the plastid Sec protein translocase complex, which is composed of at least SecY and SecE.

It is found in the plastid. Its subcellular location is the chloroplast thylakoid membrane. Its function is as follows. The central subunit of the protein translocation channel SecYE. Consists of two halves. These two domains form a lateral gate at the front which open onto the bilayer between TMs 2 and 7, and are clamped together by SecE at the back. The channel is closed by both a pore ring composed of hydrophobic SecY resides and a short helix (helix 2A) on the extracellular side of the membrane which forms a plug. This Vaucheria litorea (Yellow-green alga) protein is Protein translocase subunit SecY.